We begin with the raw amino-acid sequence, 690 residues long: Elongation factor G (690 aa).

Residues 8-283 (EDYRNFGIMA…AVVDYLPSPL (276 aa)) form the tr-type G domain. GTP-binding positions include 17–24 (AHIDAGKT), 81–85 (DTPGH), and 135–138 (NKMD).

This sequence belongs to the TRAFAC class translation factor GTPase superfamily. Classic translation factor GTPase family. EF-G/EF-2 subfamily.

It is found in the cytoplasm. In terms of biological role, catalyzes the GTP-dependent ribosomal translocation step during translation elongation. During this step, the ribosome changes from the pre-translocational (PRE) to the post-translocational (POST) state as the newly formed A-site-bound peptidyl-tRNA and P-site-bound deacylated tRNA move to the P and E sites, respectively. Catalyzes the coordinated movement of the two tRNA molecules, the mRNA and conformational changes in the ribosome. The polypeptide is Elongation factor G (Bradyrhizobium sp. (strain BTAi1 / ATCC BAA-1182)).